We begin with the raw amino-acid sequence, 387 residues long: Chaperone protein DnaJ (387 aa).

The 66-residue stretch at 5 to 70 folds into the J domain; that stretch reads DYYEVLGLQK…DKKAKYDQFG (66 aa). A CR-type zinc finger spans residues 144–226; that stretch reads GCEKEISITR…CKGKGTVRKN (83 aa). Residues Cys-157, Cys-160, Cys-174, Cys-177, Cys-200, Cys-203, Cys-214, and Cys-217 each contribute to the Zn(2+) site. 4 CXXCXGXG motif repeats span residues 157-164, 174-181, 200-207, and 214-221; these read CETCHGTG, CPKCNGSG, CDQCGGTG, and CPDCKGKG.

It belongs to the DnaJ family. As to quaternary structure, homodimer. Requires Zn(2+) as cofactor.

It localises to the cytoplasm. Its function is as follows. Participates actively in the response to hyperosmotic and heat shock by preventing the aggregation of stress-denatured proteins and by disaggregating proteins, also in an autonomous, DnaK-independent fashion. Unfolded proteins bind initially to DnaJ; upon interaction with the DnaJ-bound protein, DnaK hydrolyzes its bound ATP, resulting in the formation of a stable complex. GrpE releases ADP from DnaK; ATP binding to DnaK triggers the release of the substrate protein, thus completing the reaction cycle. Several rounds of ATP-dependent interactions between DnaJ, DnaK and GrpE are required for fully efficient folding. Also involved, together with DnaK and GrpE, in the DNA replication of plasmids through activation of initiation proteins. This Clostridium perfringens (strain 13 / Type A) protein is Chaperone protein DnaJ.